An 86-amino-acid polypeptide reads, in one-letter code: Small ribosomal subunit protein uS17 (86 aa).

Belongs to the universal ribosomal protein uS17 family. Part of the 30S ribosomal subunit.

In terms of biological role, one of the primary rRNA binding proteins, it binds specifically to the 5'-end of 16S ribosomal RNA. The protein is Small ribosomal subunit protein uS17 of Streptococcus pyogenes serotype M3 (strain ATCC BAA-595 / MGAS315).